The sequence spans 217 residues: Small ribosomal subunit protein uS3 (217 aa).

The KH type-2 domain occupies 38–106 (IRKFIDNELK…KVHINVIEIK (69 aa)).

The protein belongs to the universal ribosomal protein uS3 family. Part of the 30S ribosomal subunit. Forms a tight complex with proteins S10 and S14.

Its function is as follows. Binds the lower part of the 30S subunit head. Binds mRNA in the 70S ribosome, positioning it for translation. This Staphylococcus epidermidis (strain ATCC 35984 / DSM 28319 / BCRC 17069 / CCUG 31568 / BM 3577 / RP62A) protein is Small ribosomal subunit protein uS3.